We begin with the raw amino-acid sequence, 393 residues long: Cytochrome b (393 aa).

A run of 4 helical transmembrane segments spans residues 38–58 (FGSL…FLAM), 82–104 (WLLR…LHIF), 119–139 (VWCL…IGYV), and 185–205 (FFSL…LHLA). Heme b is bound by residues H88 and H102. 2 residues coordinate heme b: H189 and H203. Residue H208 coordinates a ubiquinone. 4 consecutive transmembrane segments (helical) span residues 231-251 (FYVK…IWIF), 295-315 (VGGV…PFFK), 327-347 (IYQG…WIGC), and 354-373 (FVTI…AITP).

This sequence belongs to the cytochrome b family. As to quaternary structure, the main subunits of complex b-c1 are: cytochrome b, cytochrome c1 and the Rieske protein. Requires heme b as cofactor. First mitochondrial-encoded protein to be shown to have its N-terminal methionine cleaved off.

The protein resides in the mitochondrion inner membrane. In terms of biological role, component of the ubiquinol-cytochrome c reductase complex (complex III or cytochrome b-c1 complex) that is part of the mitochondrial respiratory chain. The b-c1 complex mediates electron transfer from ubiquinol to cytochrome c. Contributes to the generation of a proton gradient across the mitochondrial membrane that is then used for ATP synthesis. This chain is Cytochrome b (MT-CYB), found in Solanum tuberosum (Potato).